Reading from the N-terminus, the 351-residue chain is Probable cobalt-factor III C(17)-methyltransferase (351 aa).

This sequence belongs to the precorrin methyltransferase family.

The catalysed reaction is Co(II)-factor III + S-adenosyl-L-methionine + H(+) = Co(II)-factor IV + S-adenosyl-L-homocysteine. It functions in the pathway cofactor biosynthesis; adenosylcobalamin biosynthesis; cob(II)yrinate a,c-diamide from sirohydrochlorin (anaerobic route): step 3/10. Its function is as follows. Methyltransferase that likely catalyzes the ring contraction and methylation of C-17 in cobalt-factor III to form cobalt-factor IV. May also convert cobalt-precorrin-3 to cobalt-precorrin-4. The protein is Probable cobalt-factor III C(17)-methyltransferase (cbiH) of Methanothermobacter thermautotrophicus (strain ATCC 29096 / DSM 1053 / JCM 10044 / NBRC 100330 / Delta H) (Methanobacterium thermoautotrophicum).